Consider the following 869-residue polypeptide: Protein translocase subunit SecA (869 aa).

ATP contacts are provided by residues Q88, 106–110 (GEGKT), and D509. Over residues 818–840 (QDEGLKFNQREGEDAPAVREKKI) the composition is skewed to basic and acidic residues. The segment at 818–869 (QDEGLKFNQREGEDAPAVREKKIPRNSPCPCGSGKKYKDCCGKSGPKKGILA) is disordered. Zn(2+) contacts are provided by C846, C848, C857, and C858.

Belongs to the SecA family. Monomer and homodimer. Part of the essential Sec protein translocation apparatus which comprises SecA, SecYEG and auxiliary proteins SecDF-YajC and YidC. The cofactor is Zn(2+).

The protein resides in the cell inner membrane. It localises to the cytoplasm. The catalysed reaction is ATP + H2O + cellular proteinSide 1 = ADP + phosphate + cellular proteinSide 2.. Part of the Sec protein translocase complex. Interacts with the SecYEG preprotein conducting channel. Has a central role in coupling the hydrolysis of ATP to the transfer of proteins into and across the cell membrane, serving as an ATP-driven molecular motor driving the stepwise translocation of polypeptide chains across the membrane. This chain is Protein translocase subunit SecA, found in Campylobacter curvus (strain 525.92).